The following is a 291-amino-acid chain: tRNA-cytidine(32) 2-sulfurtransferase (291 aa).

Positions 36–41 (SGGKDS) match the PP-loop motif motif. The [4Fe-4S] cluster site is built by cysteine 111, cysteine 114, and cysteine 202. The tract at residues 258–291 (RDPWLDAEDEEAEDCGEPPAGDGVVSLGGARGGR) is disordered. The segment covering 262–273 (LDAEDEEAEDCG) has biased composition (acidic residues).

The protein belongs to the TtcA family. Homodimer. Mg(2+) serves as cofactor. [4Fe-4S] cluster is required as a cofactor.

The protein resides in the cytoplasm. It catalyses the reaction cytidine(32) in tRNA + S-sulfanyl-L-cysteinyl-[cysteine desulfurase] + AH2 + ATP = 2-thiocytidine(32) in tRNA + L-cysteinyl-[cysteine desulfurase] + A + AMP + diphosphate + H(+). The protein operates within tRNA modification. In terms of biological role, catalyzes the ATP-dependent 2-thiolation of cytidine in position 32 of tRNA, to form 2-thiocytidine (s(2)C32). The sulfur atoms are provided by the cysteine/cysteine desulfurase (IscS) system. This Anaeromyxobacter dehalogenans (strain 2CP-1 / ATCC BAA-258) protein is tRNA-cytidine(32) 2-sulfurtransferase.